The following is an 894-amino-acid chain: Leucine--tRNA ligase, mitochondrial (894 aa).

The N-terminal 9 residues, 1–9 (MLSRPSSRF), are a transit peptide targeting the mitochondrion. The short motif at 56-66 (PYPSGALHIGH) is the 'HIGH' region element. The 'KMSKS' region signature appears at 646–650 (KMSKS). Lysine 649 contributes to the ATP binding site.

This sequence belongs to the class-I aminoacyl-tRNA synthetase family.

The protein localises to the mitochondrion matrix. It catalyses the reaction tRNA(Leu) + L-leucine + ATP = L-leucyl-tRNA(Leu) + AMP + diphosphate. Catalyzes the attachment of leucine to tRNA(Leu) in the mitochondrion. This chain is Leucine--tRNA ligase, mitochondrial (NAM2), found in Saccharomyces cerevisiae (strain ATCC 204508 / S288c) (Baker's yeast).